The following is an 84-amino-acid chain: Putative regulatory protein Hore_09800 (84 aa).

Belongs to the RemA family.

The chain is Putative regulatory protein Hore_09800 from Halothermothrix orenii (strain H 168 / OCM 544 / DSM 9562).